The primary structure comprises 418 residues: uncharacterized protein (418 aa).

Residues 7–158 (IDVRPIAEAE…TGLDPRWSGP (152 aa)) form the N-acetyltransferase domain. Residues 87–89 (VTV) and 95–100 (RRGLLT) each bind acetyl-CoA. The active-site Proton donor is Tyr-128. Phe-418 acts as the Proton acceptor; via carboxylate in catalysis.

The protein belongs to the acetyltransferase Eis family. In terms of assembly, homohexamer; trimer of dimers.

This is an uncharacterized protein from Streptomyces avermitilis (strain ATCC 31267 / DSM 46492 / JCM 5070 / NBRC 14893 / NCIMB 12804 / NRRL 8165 / MA-4680).